A 202-amino-acid chain; its full sequence is Na(+)-translocating NADH-quinone reductase subunit E (202 aa).

The next 6 membrane-spanning stretches (helical) occupy residues 11–31, 35–55, 81–101, 114–134, 144–164, and 182–202; these read SVFVKNMALAYFLGMCTFLAI, IDAAIGLGIAVVVVLTITVPV, FLGLICYIGVIAAIVQIMEMV, GVFLPLITVNCAILGAALLMV, VVFGVGSGVGWAFAIVALAGI, and ITFITVGLMSLGFMSFGGIAL.

The protein belongs to the NqrDE/RnfAE family. In terms of assembly, composed of six subunits; NqrA, NqrB, NqrC, NqrD, NqrE and NqrF.

It localises to the cell inner membrane. The enzyme catalyses a ubiquinone + n Na(+)(in) + NADH + H(+) = a ubiquinol + n Na(+)(out) + NAD(+). In terms of biological role, NQR complex catalyzes the reduction of ubiquinone-1 to ubiquinol by two successive reactions, coupled with the transport of Na(+) ions from the cytoplasm to the periplasm. NqrA to NqrE are probably involved in the second step, the conversion of ubisemiquinone to ubiquinol. The chain is Na(+)-translocating NADH-quinone reductase subunit E from Saccharophagus degradans (strain 2-40 / ATCC 43961 / DSM 17024).